Here is a 745-residue protein sequence, read N- to C-terminus: MQRDYLIRVETESMSDFKRLNSLMIGFVIKGEAHIYDENNMTQCNSGDIFIINHRDLYRFQLQQDGIICYIQFQMKYLADKFDDVHCLYFHLTDATTTKNIHQLRNIMARLVSTHIRHNELSKLTEQQLVIQLLMHMIHYVPRTYHSNQSILNDDKVNQVCDYIELHFHEDLSLSELSEYVGWSESHLSKKFTESLGVGFHHFLNTTRIEHAKLDLTYTDETITDIALQNGFSSAASFARTFKHFTHQTPKQYRGDRPAITENQQSAQHDYHDRELILLLNDYIEEMNHFIEDIEKMNYKEIAFQPTNHQLNQFNHIIQVGYLRNLLNTQYQSQLLTCHHDFQVNEVLAYDVIPYIMKKLNAPFTYDAEISNIFYDIDLCLDFLLDHNFSLTMHLDQYDSRDYIDAFKIFIHHVALHVSHRKDLKFNLYVTTLHTSLIEMIDYFKALFPNGGLYIHLDQATERHLPLLKRLEPHIDHFVFDANSNDAVDFNKMNDDEFKTASQMIINKTNYLIDLMHRHRLKRPLILLNWNTLTGDTFITNGEYFRGGIIIEQLLKLSSKVEGIGYWLNYDLHVSHCKNERDYMNSIELFHQYNGKRPVYFTALLFNKLTSNILYSDDTCIVTGTDSNFQILLYDAKHFNPYLALDNQMNMRATEMIHLNINALEEGMYKIKHFTLDKENGALFNLWRKHHTIHGMDKDSIDYVNRMSFPKLEVYDIDITDTLALNIKMITNGIHLIEVKRYPSS.

The region spanning 158–256 is the HTH araC/xylS-type domain; that stretch reads NQVCDYIELH…HQTPKQYRGD (99 aa). 2 DNA-binding regions (H-T-H motif) span residues 175 to 196 and 223 to 246; these read SELS…TESL and ITDI…KHFT.

This is an uncharacterized protein from Staphylococcus aureus (strain COL).